Reading from the N-terminus, the 383-residue chain is Succinyl-diaminopimelate desuccinylase (383 aa).

H74 contributes to the Zn(2+) binding site. D76 is an active-site residue. D107 serves as a coordination point for Zn(2+). The Proton acceptor role is filled by E141. Zn(2+) contacts are provided by E142, E170, and H356.

This sequence belongs to the peptidase M20A family. DapE subfamily. As to quaternary structure, homodimer. The cofactor is Zn(2+). Co(2+) serves as cofactor.

The enzyme catalyses N-succinyl-(2S,6S)-2,6-diaminopimelate + H2O = (2S,6S)-2,6-diaminopimelate + succinate. The protein operates within amino-acid biosynthesis; L-lysine biosynthesis via DAP pathway; LL-2,6-diaminopimelate from (S)-tetrahydrodipicolinate (succinylase route): step 3/3. Its function is as follows. Catalyzes the hydrolysis of N-succinyl-L,L-diaminopimelic acid (SDAP), forming succinate and LL-2,6-diaminopimelate (DAP), an intermediate involved in the bacterial biosynthesis of lysine and meso-diaminopimelic acid, an essential component of bacterial cell walls. In Polynucleobacter necessarius subsp. necessarius (strain STIR1), this protein is Succinyl-diaminopimelate desuccinylase.